Reading from the N-terminus, the 98-residue chain is Large ribosomal subunit protein eL14 (98 aa).

This sequence belongs to the eukaryotic ribosomal protein eL14 family.

The sequence is that of Large ribosomal subunit protein eL14 from Hyperthermus butylicus (strain DSM 5456 / JCM 9403 / PLM1-5).